The sequence spans 349 residues: tRNA pseudouridine synthase D (349 aa).

Position 27 (Phe27) interacts with substrate. The active-site Nucleophile is the Asp80. Asn129 is a substrate binding site. A TRUD domain is found at 155–303 (GVPNYFGAQR…VEASRRAMLL (149 aa)). Phe329 contacts substrate.

Belongs to the pseudouridine synthase TruD family.

The enzyme catalyses uridine(13) in tRNA = pseudouridine(13) in tRNA. Functionally, responsible for synthesis of pseudouridine from uracil-13 in transfer RNAs. The sequence is that of tRNA pseudouridine synthase D from Salmonella choleraesuis (strain SC-B67).